Consider the following 936-residue polypeptide: Protocadherin alpha-5 (936 aa).

Residues 1–28 (MVYSRRGSLGSRLLLLWLLLAYWKAGSG) form the signal peptide. Residues 29–696 (QLHYSIPEEA…GPEAALVDVN (668 aa)) lie on the Extracellular side of the membrane. Cadherin domains follow at residues 33–132 (SIPE…PPRF), 156–241 (ASDL…APEF), 242–349 (DKSI…TPEM), 350–454 (AITT…LRAF), 455–564 (AQPQ…APAL), and 580–677 (VPRS…APKA). Asparagine 264, asparagine 448, and asparagine 547 each carry an N-linked (GlcNAc...) asparagine glycan. Residues 697–717 (VYLIIAICAVSSLLVLTLLLY) form a helical membrane-spanning segment. The Cytoplasmic segment spans residues 718–936 (TALRCSAQPT…GNSTTDNSDQ (219 aa)). 3 disordered regions span residues 759–793 (SGEA…PDWR), 815–875 (RAGP…DKFI), and 887–936 (QEPA…NSDQ). PXXP repeat units follow at residues 773 to 776 (PSLP), 785 to 788 (PRQP), 818 to 821 (PGGP), 873 to 876 (KFII), and 877 to 890 (PGSP…QEPA). The interval 773 to 890 (PSLPQGPTST…AIISIRQEPA (118 aa)) is 5 X 4 AA repeats of P-X-X-P. The segment covering 774–786 (SLPQGPTSTDNPR) has biased composition (polar residues). Residues 895-909 (DKSDFITFGKKEETK) are compositionally biased toward basic and acidic residues.

It is found in the cell membrane. Functionally, potential calcium-dependent cell-adhesion protein. May be involved in the establishment and maintenance of specific neuronal connections in the brain. This Pan troglodytes (Chimpanzee) protein is Protocadherin alpha-5 (PCDHA5).